Consider the following 297-residue polypeptide: tRNA pseudouridine synthase B (297 aa).

The Nucleophile role is filled by Asp-44.

Belongs to the pseudouridine synthase TruB family. Type 1 subfamily.

The catalysed reaction is uridine(55) in tRNA = pseudouridine(55) in tRNA. Its function is as follows. Responsible for synthesis of pseudouridine from uracil-55 in the psi GC loop of transfer RNAs. This chain is tRNA pseudouridine synthase B, found in Corynebacterium aurimucosum (strain ATCC 700975 / DSM 44827 / CIP 107346 / CN-1) (Corynebacterium nigricans).